Reading from the N-terminus, the 367-residue chain is Phospho-N-acetylmuramoyl-pentapeptide-transferase (367 aa).

10 consecutive transmembrane segments (helical) span residues 16–36 (LLLA…WVHF), 62–82 (TMGG…FNLV), 87–107 (MLLP…DDWL), 125–145 (FWIM…PQPY), 158–178 (VGEV…IVFI), 190–210 (SLAG…TFLA), 214–234 (LTNL…FLWY), 240–260 (QVFM…VVAL), 264–284 (QWIL…STLI), and 326–346 (FVLI…IFGS).

Belongs to the glycosyltransferase 4 family. MraY subfamily. It depends on Mg(2+) as a cofactor.

It is found in the cell membrane. The enzyme catalyses UDP-N-acetyl-alpha-D-muramoyl-L-alanyl-gamma-D-glutamyl-meso-2,6-diaminopimeloyl-D-alanyl-D-alanine + di-trans,octa-cis-undecaprenyl phosphate = di-trans,octa-cis-undecaprenyl diphospho-N-acetyl-alpha-D-muramoyl-L-alanyl-D-glutamyl-meso-2,6-diaminopimeloyl-D-alanyl-D-alanine + UMP. It functions in the pathway cell wall biogenesis; peptidoglycan biosynthesis. Its function is as follows. Catalyzes the initial step of the lipid cycle reactions in the biosynthesis of the cell wall peptidoglycan: transfers peptidoglycan precursor phospho-MurNAc-pentapeptide from UDP-MurNAc-pentapeptide onto the lipid carrier undecaprenyl phosphate, yielding undecaprenyl-pyrophosphoryl-MurNAc-pentapeptide, known as lipid I. The protein is Phospho-N-acetylmuramoyl-pentapeptide-transferase of Chloroflexus aggregans (strain MD-66 / DSM 9485).